Here is a 368-residue protein sequence, read N- to C-terminus: tRNA-specific 2-thiouridylase MnmA (368 aa).

Residues 12 to 19 (GMSGGVDS) and methionine 38 each bind ATP. An interaction with target base in tRNA region spans residues 98-100 (NPD). Cysteine 103 serves as the catalytic Nucleophile. Cysteine 103 and cysteine 200 are joined by a disulfide. Glycine 128 contacts ATP. Residues 150-152 (KDQ) are interaction with tRNA. Cysteine 200 (cysteine persulfide intermediate) is an active-site residue. The tract at residues 313 to 314 (RY) is interaction with tRNA.

This sequence belongs to the MnmA/TRMU family. As to quaternary structure, interacts with TusE.

Its subcellular location is the cytoplasm. The catalysed reaction is S-sulfanyl-L-cysteinyl-[protein] + uridine(34) in tRNA + AH2 + ATP = 2-thiouridine(34) in tRNA + L-cysteinyl-[protein] + A + AMP + diphosphate + H(+). Functionally, catalyzes the 2-thiolation of uridine at the wobble position (U34) of tRNA(Lys), tRNA(Glu) and tRNA(Gln), leading to the formation of s(2)U34, the first step of tRNA-mnm(5)s(2)U34 synthesis. Sulfur is provided by IscS, via a sulfur-relay system. Binds ATP and its substrate tRNAs. The protein is tRNA-specific 2-thiouridylase MnmA of Pectobacterium carotovorum subsp. carotovorum (strain PC1).